A 611-amino-acid chain; its full sequence is Threonine--tRNA ligase (611 aa).

Residues 209–502 form a catalytic region; it reads DHRRLGKDLE…MTENYAGDFP (294 aa). Zn(2+) is bound by residues cysteine 302, histidine 353, and histidine 479.

Belongs to the class-II aminoacyl-tRNA synthetase family. In terms of assembly, homodimer. Requires Zn(2+) as cofactor.

It is found in the cytoplasm. It catalyses the reaction tRNA(Thr) + L-threonine + ATP = L-threonyl-tRNA(Thr) + AMP + diphosphate + H(+). In terms of biological role, catalyzes the attachment of threonine to tRNA(Thr) in a two-step reaction: L-threonine is first activated by ATP to form Thr-AMP and then transferred to the acceptor end of tRNA(Thr). Also edits incorrectly charged L-seryl-tRNA(Thr). The sequence is that of Threonine--tRNA ligase from Synechococcus sp. (strain CC9902).